A 398-amino-acid chain; its full sequence is Autophagy-related protein 39 (398 aa).

An ATG8-binding motif is present at residues 8 to 11 (WNLV). The disordered stretch occupies residues 15–50 (RLRKGREGEEQSSKSEISLDSLHESSFAGEDDEDFD). Positions 52–59 (DVLSNTSS) match the ATG11-binding motif. A helical transmembrane segment spans residues 148-164 (VIMLSSLLSMTFSYLAL).

Interacts with ATG8 and ATG11.

It is found in the endoplasmic reticulum membrane. The protein localises to the preautophagosomal structure membrane. In terms of biological role, acts as a receptor for reticulophagy and nucleophagy. Directs autophagic sequestration of double-membrane vesicles derived from the nuclear envelope and perinuclear endoplasmic reticulum (pnER) into autophagosomes. Is not required for the cytoplasm-to-vacuole targeting pathway, mitophagy, pexophagy, and non-selective autophagy. The sequence is that of Autophagy-related protein 39 from Saccharomyces cerevisiae (strain ATCC 204508 / S288c) (Baker's yeast).